The chain runs to 426 residues: UPF0229 protein YeaH (426 aa).

The segment covering 78–92 has biased composition (basic and acidic residues); that stretch reads GNDHFIQNDRIERPQ. Residues 78 to 108 form a disordered region; it reads GNDHFIQNDRIERPQDGGGSGSGNGQASQDG.

Belongs to the UPF0229 family.

In Salmonella arizonae (strain ATCC BAA-731 / CDC346-86 / RSK2980), this protein is UPF0229 protein YeaH.